Here is a 274-residue protein sequence, read N- to C-terminus: Orotidine 5'-phosphate decarboxylase (274 aa).

Catalysis depends on Lys96, which acts as the Proton donor.

This sequence belongs to the OMP decarboxylase family. Type 2 subfamily.

It catalyses the reaction orotidine 5'-phosphate + H(+) = UMP + CO2. It participates in pyrimidine metabolism; UMP biosynthesis via de novo pathway; UMP from orotate: step 2/2. This is Orotidine 5'-phosphate decarboxylase from Bacteroides fragilis (strain ATCC 25285 / DSM 2151 / CCUG 4856 / JCM 11019 / LMG 10263 / NCTC 9343 / Onslow / VPI 2553 / EN-2).